A 205-amino-acid chain; its full sequence is Protein MIS12 homolog (205 aa).

Positions 108–205 (PYSEEDFQHL…EKESKRLKIS (98 aa)) form a coiled coil.

The protein belongs to the mis12 family. In terms of assembly, component of the MIS12 complex composed of MIS12, DSN1, NSL1 and PMF1. Also interacts with KNL1, CBX3, CBX5, NDC80 and ZWINT.

Its subcellular location is the chromosome. It localises to the centromere. The protein resides in the kinetochore. In terms of biological role, part of the MIS12 complex which is required for normal chromosome alignment and segregation and for kinetochore formation during mitosis. Essential for proper kinetochore microtubule attachments. The chain is Protein MIS12 homolog from Homo sapiens (Human).